We begin with the raw amino-acid sequence, 425 residues long: Serine--tRNA ligase 2 (425 aa).

230-232 (TAE) is an L-serine binding site. Residue 261 to 263 (REE) coordinates ATP. Glu-284 lines the L-serine pocket. Position 348 to 351 (348 to 351 (EISS)) interacts with ATP. Ser-383 contributes to the L-serine binding site.

This sequence belongs to the class-II aminoacyl-tRNA synthetase family. Type-1 seryl-tRNA synthetase subfamily. Homodimer. The tRNA molecule binds across the dimer.

Its subcellular location is the cytoplasm. It carries out the reaction tRNA(Ser) + L-serine + ATP = L-seryl-tRNA(Ser) + AMP + diphosphate + H(+). The enzyme catalyses tRNA(Sec) + L-serine + ATP = L-seryl-tRNA(Sec) + AMP + diphosphate + H(+). It functions in the pathway aminoacyl-tRNA biosynthesis; selenocysteinyl-tRNA(Sec) biosynthesis; L-seryl-tRNA(Sec) from L-serine and tRNA(Sec): step 1/1. Catalyzes the attachment of serine to tRNA(Ser). Is also able to aminoacylate tRNA(Sec) with serine, to form the misacylated tRNA L-seryl-tRNA(Sec), which will be further converted into selenocysteinyl-tRNA(Sec). The polypeptide is Serine--tRNA ligase 2 (Lactiplantibacillus plantarum (strain ATCC BAA-793 / NCIMB 8826 / WCFS1) (Lactobacillus plantarum)).